Here is a 1330-residue protein sequence, read N- to C-terminus: ESX-3 secretion system protein EccC3 (1330 aa).

2 helical membrane-spanning segments follow: residues 43–63 and 65–85; these read LPYLIGILIVGMIVALVATGM and VISPQTLFFPFVLLLAATALY. FtsK domains follow at residues 456-662, 811-1000, and 1090-1280; these read GEPL…SVSR, RDPL…RDSN, and LAPV…ADSG. ATP-binding positions include 479-486, 829-836, and 1107-1114; these read GMTGSGKS, GGPKSGKS, and GDARSGKT.

As to quaternary structure, part of the ESX-3 / type VII secretion system (T7SS), which is composed of cytosolic and membrane components. The ESX-3 membrane complex is composed of EccB3, EccC3, EccD3 and EccE3.

The protein localises to the cell inner membrane. Part of the ESX-3 specialized secretion system, which is important for iron and zinc uptake or homeostasis. The chain is ESX-3 secretion system protein EccC3 from Mycobacterium tuberculosis (strain ATCC 25618 / H37Rv).